The sequence spans 397 residues: Acetyl-CoA acetyltransferase, cytosolic (397 aa).

An N-acetylmethionine modification is found at Met-1. The active-site Acyl-thioester intermediate is Cys-92. An N6-acetyllysine modification is found at Lys-200. CoA is bound by residues Arg-223 and Ser-226. N6-acetyllysine occurs at positions 233 and 235. Ser-252 is a binding site for CoA. The active-site Proton donor/acceptor is Cys-383.

The protein belongs to the thiolase-like superfamily. Thiolase family. Homotetramer.

The protein localises to the cytoplasm. The protein resides in the cytosol. It carries out the reaction 2 acetyl-CoA = acetoacetyl-CoA + CoA. The protein operates within lipid metabolism; fatty acid metabolism. In terms of biological role, involved in the biosynthetic pathway of cholesterol. The protein is Acetyl-CoA acetyltransferase, cytosolic (Acat2) of Rattus norvegicus (Rat).